Reading from the N-terminus, the 81-residue chain is Insect-toxin Cn10 (81 aa).

Residues 1 to 13 (ITACLVLIGTVCA) form the signal peptide. Positions 14–79 (KEGYLVNKST…TYPIPGKTCR (66 aa)) constitute an LCN-type CS-alpha/beta domain. Disulfide bonds link Cys25–Cys78, Cys29–Cys54, Cys38–Cys59, and Cys42–Cys61. A propeptide (removed by a carboxypeptidase) is located at residue Lys81.

It belongs to the long (4 C-C) scorpion toxin superfamily. Sodium channel inhibitor family. Beta subfamily. As to expression, expressed by the venom gland.

The protein resides in the secreted. Functionally, beta toxins bind voltage-independently at site-4 of sodium channels (Nav) and shift the voltage of activation toward more negative potentials thereby affecting sodium channel activation and promoting spontaneous and repetitive firing. Is toxic on insects and crustaceans, but not on mammals. This chain is Insect-toxin Cn10, found in Centruroides noxius (Mexican scorpion).